The primary structure comprises 125 residues: Linear element protein rec27 (125 aa).

Residues 45 to 104 (KTNIENEKKAFIKDVSQVQQKIKEFEIQKANQIKQLNEEKLSIEARKQQLEIEIRNQLLQ) are a coiled coil.

Component of linear elements (LinEs), which are similar to synaptonemal complexes, at least composed of rec27, rec25, rec10 and mug20.

It localises to the cytoplasm. The protein localises to the nucleus. Its subcellular location is the chromosome. Its function is as follows. During meiotic DNA recombination, binds to and activates DNA double-strand break (DSB) hotspot sites. The chain is Linear element protein rec27 from Schizosaccharomyces pombe (strain 972 / ATCC 24843) (Fission yeast).